Reading from the N-terminus, the 156-residue chain is Small ribosomal subunit protein uS7 (156 aa).

This sequence belongs to the universal ribosomal protein uS7 family. Part of the 30S ribosomal subunit. Contacts proteins S9 and S11.

One of the primary rRNA binding proteins, it binds directly to 16S rRNA where it nucleates assembly of the head domain of the 30S subunit. Is located at the subunit interface close to the decoding center, probably blocks exit of the E-site tRNA. This is Small ribosomal subunit protein uS7 from Clavibacter michiganensis subsp. michiganensis (strain NCPPB 382).